A 562-amino-acid polypeptide reads, in one-letter code: NAD-dependent malic enzyme (562 aa).

The active-site Proton donor is Tyr-101. Arg-154 is an NAD(+) binding site. Lys-172 serves as the catalytic Proton acceptor. Residues Glu-243, Asp-244, and Asp-267 each contribute to the a divalent metal cation site. NAD(+) is bound by residues Asp-267 and Asn-415.

Belongs to the malic enzymes family. Homotetramer. Mg(2+) is required as a cofactor. Requires Mn(2+) as cofactor.

The catalysed reaction is (S)-malate + NAD(+) = pyruvate + CO2 + NADH. The enzyme catalyses oxaloacetate + H(+) = pyruvate + CO2. The sequence is that of NAD-dependent malic enzyme from Vibrio campbellii (strain ATCC BAA-1116).